The sequence spans 116 residues: uncharacterized protein (116 aa).

This is an uncharacterized protein from Escherichia coli (strain K12).